A 403-amino-acid chain; its full sequence is MPKFKRVHLVVMDSVGIGAAPDSDKFFNAGVADTESDTLGHISEKAGLEVPNMTKIGLGNIPRDTALATVPAESHPTGYVTKLEEVSLGKDTMTGHWEIMGLNITEPFDTFWDGFPEEILTKIEEFSGRKIIREANKPYSGTAVIDDFGPRQMETGELIVYTSADPVLQIAAHEDIIPLDELYRICEYARSITLERPALLGRIIARPYVGEPGNFSRTANRHDYAVSPFEATVLNKLADAGVPTYSVGKISDIFNGSGITNDMGHTKSNMHGVDVLIDTLKLSDFEEGFSFTNLVDFDAVYGHRRNIEGYRDCLQEFDARIPEIIDNMREDDLLLITADHGNDPSYAGTDHTREYVPLLAYSKAFKGSGVLPVGHFADISATVAENFGVDTAMIGESFLSQLV.

Residues D13, D298, H303, D339, H340, and H351 each coordinate Mn(2+).

Belongs to the phosphopentomutase family. Mn(2+) is required as a cofactor.

The protein localises to the cytoplasm. The catalysed reaction is 2-deoxy-alpha-D-ribose 1-phosphate = 2-deoxy-D-ribose 5-phosphate. The enzyme catalyses alpha-D-ribose 1-phosphate = D-ribose 5-phosphate. It participates in carbohydrate degradation; 2-deoxy-D-ribose 1-phosphate degradation; D-glyceraldehyde 3-phosphate and acetaldehyde from 2-deoxy-alpha-D-ribose 1-phosphate: step 1/2. Isomerase that catalyzes the conversion of deoxy-ribose 1-phosphate (dRib-1-P) and ribose 1-phosphate (Rib-1-P) to deoxy-ribose 5-phosphate (dRib-5-P) and ribose 5-phosphate (Rib-5-P), respectively. This chain is Phosphopentomutase, found in Streptococcus suis (strain 05ZYH33).